A 125-amino-acid polypeptide reads, in one-letter code: Large ribosomal subunit protein bL12 (125 aa).

The protein belongs to the bacterial ribosomal protein bL12 family. In terms of assembly, homodimer. Part of the ribosomal stalk of the 50S ribosomal subunit. Forms a multimeric L10(L12)X complex, where L10 forms an elongated spine to which 2 to 4 L12 dimers bind in a sequential fashion. Binds GTP-bound translation factors.

Its function is as follows. Forms part of the ribosomal stalk which helps the ribosome interact with GTP-bound translation factors. Is thus essential for accurate translation. This Bradyrhizobium sp. (strain ORS 278) protein is Large ribosomal subunit protein bL12.